Reading from the N-terminus, the 150-residue chain is Transcriptional repressor NrdR (150 aa).

The segment at 3–34 (CPFCGYEETKVLDSRPVSNGTSIRRRRECLQC) is a zinc-finger region. One can recognise an ATP-cone domain in the interval 49-139 (IRIIKKDGRR…VYKEFRDLDS (91 aa)).

This sequence belongs to the NrdR family. Requires Zn(2+) as cofactor.

Its function is as follows. Negatively regulates transcription of bacterial ribonucleotide reductase nrd genes and operons by binding to NrdR-boxes. In Petrotoga mobilis (strain DSM 10674 / SJ95), this protein is Transcriptional repressor NrdR.